A 189-amino-acid polypeptide reads, in one-letter code: Elongation factor P (189 aa).

This sequence belongs to the elongation factor P family.

It is found in the cytoplasm. The protein operates within protein biosynthesis; polypeptide chain elongation. Involved in peptide bond synthesis. Stimulates efficient translation and peptide-bond synthesis on native or reconstituted 70S ribosomes in vitro. Probably functions indirectly by altering the affinity of the ribosome for aminoacyl-tRNA, thus increasing their reactivity as acceptors for peptidyl transferase. The sequence is that of Elongation factor P from Orientia tsutsugamushi (strain Boryong) (Rickettsia tsutsugamushi).